The chain runs to 341 residues: Fructose-1,6-bisphosphatase class 1 1 (341 aa).

The Mg(2+) site is built by glutamate 92, aspartate 114, leucine 116, and aspartate 117. Residues 117-120 (DGSS), asparagine 209, and lysine 275 contribute to the substrate site. Mg(2+) is bound at residue glutamate 281.

It belongs to the FBPase class 1 family. In terms of assembly, homotetramer. Requires Mg(2+) as cofactor.

The protein localises to the cytoplasm. It catalyses the reaction beta-D-fructose 1,6-bisphosphate + H2O = beta-D-fructose 6-phosphate + phosphate. The protein operates within carbohydrate biosynthesis; gluconeogenesis. This chain is Fructose-1,6-bisphosphatase class 1 1, found in Leptothrix cholodnii (strain ATCC 51168 / LMG 8142 / SP-6) (Leptothrix discophora (strain SP-6)).